The primary structure comprises 304 residues: MSVAPIDFRNVEKRYGDKLVVNGLSFSVKVGECYGLLGPNGAGKTTTLKMLLGLAHPDAGTISLCGEPVPSRARHARQRVGVVPQFDNLDPDFTVRENLLVFSRYFGMSAQAARALVAPLLEFAKLENKADAKVGELSGGMKRRLTLARALVNDPDVLVLDEPTTGLDPQARHLMWERLRSLLARGKTILITTHFMEEAERLCDRLCVIEEGRKIAEGAPHALIESEIGCDVIEIYGPDPAALRDELSAFAKHTEISGETLFCYVIDPEPLTARLKGRPGLRYLHRPANLEDVFLRLTGREMQD.

Residues 6–236 enclose the ABC transporter domain; the sequence is IDFRNVEKRY…EIGCDVIEIY (231 aa). An ATP-binding site is contributed by 38 to 45; that stretch reads GPNGAGKT.

Belongs to the ABC transporter superfamily. Lipooligosaccharide exporter (TC 3.A.1.102) family. In terms of assembly, the complex is composed of two ATP-binding proteins (NodI) and two transmembrane proteins (NodJ).

The protein localises to the cell inner membrane. In terms of biological role, part of the ABC transporter complex NodIJ involved in the export of the nodulation factors (Nod factors), the bacterial signal molecules that induce symbiosis and subsequent nodulation induction. Nod factors are LCO (lipo-chitin oligosaccharide), a modified beta-1,4-linked N-acetylglucosamine oligosaccharide. This subunit is responsible for energy coupling to the transport system. This is Nod factor export ATP-binding protein I from Burkholderia orbicola (strain AU 1054).